The chain runs to 206 residues: Large ribosomal subunit protein uL4 (206 aa).

Belongs to the universal ribosomal protein uL4 family. In terms of assembly, part of the 50S ribosomal subunit.

One of the primary rRNA binding proteins, this protein initially binds near the 5'-end of the 23S rRNA. It is important during the early stages of 50S assembly. It makes multiple contacts with different domains of the 23S rRNA in the assembled 50S subunit and ribosome. Functionally, forms part of the polypeptide exit tunnel. The protein is Large ribosomal subunit protein uL4 of Jannaschia sp. (strain CCS1).